Reading from the N-terminus, the 80-residue chain is U4-theraphotoxin-Spl1a (80 aa).

Positions 1 to 21 (MKASLFAVIFGLVVLCACSFA) are cleaved as a signal peptide. Positions 22-50 (EDQFASPNELLKSMFVESTHELTPEVEGR) are excised as a propeptide. Intrachain disulfides connect Cys-52-Cys-66, Cys-59-Cys-71, and Cys-65-Cys-75. Leu-79 carries the post-translational modification Leucine amide.

Belongs to the neurotoxin 30 (phrixotoxin) family. In terms of tissue distribution, expressed by the venom gland.

It localises to the secreted. Functionally, probable ion channel inhibitor. Shows insecticidal activity when injected into mealworms. The polypeptide is U4-theraphotoxin-Spl1a (Selenotypus plumipes (Australian featherleg tarantula)).